A 154-amino-acid chain; its full sequence is Ribonuclease H (154 aa).

One can recognise an RNase H type-1 domain in the interval 1–142 (MKQVDIFTDG…CDTIARGHAS (142 aa)). Mg(2+) is bound by residues aspartate 9, glutamate 47, aspartate 69, and aspartate 134.

Belongs to the RNase H family. As to quaternary structure, monomer. Mg(2+) is required as a cofactor.

The protein resides in the cytoplasm. The catalysed reaction is Endonucleolytic cleavage to 5'-phosphomonoester.. In terms of biological role, endonuclease that specifically degrades the RNA of RNA-DNA hybrids. This Oleidesulfovibrio alaskensis (strain ATCC BAA-1058 / DSM 17464 / G20) (Desulfovibrio alaskensis) protein is Ribonuclease H.